Consider the following 812-residue polypeptide: Probable inorganic carbon transporter subunit DabA (812 aa).

4 residues coordinate Zn(2+): Cys-337, Asp-339, His-499, and Cys-514.

The protein belongs to the inorganic carbon transporter (TC 9.A.2) DabA family. As to quaternary structure, forms a complex with DabB. Zn(2+) serves as cofactor.

It localises to the cell inner membrane. Functionally, part of an energy-coupled inorganic carbon pump. This Xanthomonas euvesicatoria pv. vesicatoria (strain 85-10) (Xanthomonas campestris pv. vesicatoria) protein is Probable inorganic carbon transporter subunit DabA.